Reading from the N-terminus, the 176-residue chain is Prenylated Rab acceptor 1 (176 aa).

M1 bears the N-acetylmethionine mark. The SKL peroxisome targeting motif motif lies at 11–13 (SRF). At S18 the chain carries Phosphoserine. The next 2 membrane-spanning stretches (helical) occupy residues 84–104 (LLTNLLLLFVIVLVVAGIVGI) and 129–149 (VCVAVPIGFLASPISTLLWLI).

Belongs to the PRA1 family. Interacts with YIP1 and the Rab GTPases SEC4, YPT1, YPT6, YPT10, YPT11, YPT31, YPT32 and YPT52.

The protein localises to the golgi apparatus membrane. It localises to the peroxisome membrane. The protein is Prenylated Rab acceptor 1 (YIP3) of Saccharomyces cerevisiae (strain ATCC 204508 / S288c) (Baker's yeast).